A 555-amino-acid polypeptide reads, in one-letter code: L-ascorbate oxidase homolog (555 aa).

A signal peptide spans 1 to 23 (MRGVKLLAACLYLAAAATVVVHA). Plastocyanin-like domains are found at residues 25-145 (DPYF…LRVN) and 158-301 (EDDY…RYEG). Asn-33, Asn-61, and Asn-110 each carry an N-linked (GlcNAc...) asparagine glycan. A disulfide bridge connects residues Cys-103 and Cys-539. 3 N-linked (GlcNAc...) asparagine glycosylation sites follow: Asn-330, Asn-350, and Asn-422. In terms of domain architecture, Plastocyanin-like 3 spans 345–524 (HYGKINITRT…LYASVLSPEK (180 aa)).

The protein belongs to the multicopper oxidase family. Maximal expression in early binucleate microspores; declines considerably in mature trinucleate pollen.

Its subcellular location is the secreted. Functionally, probable oxidase that may be involved in pollen tube growth. This chain is L-ascorbate oxidase homolog (Bp10), found in Brassica napus (Rape).